A 162-amino-acid chain; its full sequence is NADH-quinone oxidoreductase subunit I (162 aa).

4Fe-4S ferredoxin-type domains follow at residues 53–83 and 93–122; these read LRRY…IESE and TRYD…ETHI. Cys-63, Cys-66, Cys-69, Cys-73, Cys-102, Cys-105, Cys-108, and Cys-112 together coordinate [4Fe-4S] cluster.

It belongs to the complex I 23 kDa subunit family. NDH-1 is composed of 14 different subunits. Subunits NuoA, H, J, K, L, M, N constitute the membrane sector of the complex. Requires [4Fe-4S] cluster as cofactor.

The protein resides in the cell inner membrane. The enzyme catalyses a quinone + NADH + 5 H(+)(in) = a quinol + NAD(+) + 4 H(+)(out). NDH-1 shuttles electrons from NADH, via FMN and iron-sulfur (Fe-S) centers, to quinones in the respiratory chain. The immediate electron acceptor for the enzyme in this species is believed to be ubiquinone. Couples the redox reaction to proton translocation (for every two electrons transferred, four hydrogen ions are translocated across the cytoplasmic membrane), and thus conserves the redox energy in a proton gradient. In Herminiimonas arsenicoxydans, this protein is NADH-quinone oxidoreductase subunit I.